The primary structure comprises 421 residues: Large ribosomal subunit protein uL4 (421 aa).

Alanine 2 carries the N-acetylalanine modification. At lysine 14 the chain carries N6-acetyllysine. Arginine 97 carries the post-translational modification Omega-N-methylarginine. The residue at position 106 (lysine 106) is an N6-acetyllysine. A Glycyl lysine isopeptide (Lys-Gly) (interchain with G-Cter in SUMO2) cross-link involves residue lysine 239. Lysine 259 bears the N6-acetyllysine mark. Threonine 266 bears the Phosphothreonine mark. Phosphoserine occurs at positions 290 and 295. Position 300 is a citrulline (arginine 300). Residue lysine 327 forms a Glycyl lysine isopeptide (Lys-Gly) (interchain with G-Cter in SUMO2) linkage. An N6-acetyllysine mark is found at lysine 333 and lysine 353. An N6-acetyllysine; alternate modification is found at lysine 364. A Glycyl lysine isopeptide (Lys-Gly) (interchain with G-Cter in SUMO1); alternate cross-link involves residue lysine 364. Position 365 is a phosphoserine (serine 365). The span at 365–379 (SEKIVPEKGAGDKKP) shows a compositional bias: basic and acidic residues. The tract at residues 365–421 (SEKIVPEKGAGDKKPAVGKKGKKPVDAKKLKKPAGKKVVTKKPAEKKPTTEEKKSAA) is disordered. A compositionally biased stretch (basic residues) spans 393 to 404 (KLKKPAGKKVVT). Positions 406–421 (KPAEKKPTTEEKKSAA) are enriched in basic and acidic residues.

This sequence belongs to the universal ribosomal protein uL4 family. Component of the large ribosomal subunit. May bind IPO9 with low affinity. Interacts with RBM3. In terms of processing, citrullinated by PADI4.

The protein localises to the cytoplasm. Functionally, component of the large ribosomal subunit. The ribosome is a large ribonucleoprotein complex responsible for the synthesis of proteins in the cell. This chain is Large ribosomal subunit protein uL4 (Rpl4), found in Rattus norvegicus (Rat).